The sequence spans 202 residues: Small ribosomal subunit protein uS4 (202 aa).

Residues 18–44 (LPGLTRKSARREYPPGQHGQGRRKRSE) form a disordered region. Positions 90-152 (MRLDNTVFRL…DRSRKLIEAN (63 aa)) constitute an S4 RNA-binding domain.

Belongs to the universal ribosomal protein uS4 family. Part of the 30S ribosomal subunit. Contacts protein S5. The interaction surface between S4 and S5 is involved in control of translational fidelity.

In terms of biological role, one of the primary rRNA binding proteins, it binds directly to 16S rRNA where it nucleates assembly of the body of the 30S subunit. Functionally, with S5 and S12 plays an important role in translational accuracy. The polypeptide is Small ribosomal subunit protein uS4 (Picosynechococcus sp. (strain ATCC 27264 / PCC 7002 / PR-6) (Agmenellum quadruplicatum)).